The chain runs to 317 residues: MVETQMDKLGFLLNHIGKQVTTKVLSNAHITQTMKEIILENHGVDGGAAKNVSKGKSSPKEKKHWTEFESWEQLSKSKRSFKEYWAERNEIVNTLLLNWDNVRGAIKKFLDDDREWCGRINMINGVPEIVEIIPSPYRAGENIYFGSEAMMPADIYSRVANKPAMFVFHTHPNLGSCCGGMPSICDISTTLRYLLMGWTAGHLIISSNQVGMLTVDKRIIVDLWANENPRWLMAQKILDIFMMLTSRRSLVNPWTLRDLKKILQDYGIEYIIFPSNDFFIYEDERLLMFSKKWTNFFTLHELLDDLETIETKASSTT.

This sequence belongs to the asfivirus F317L family.

The protein resides in the virion. This is an uncharacterized protein from African swine fever virus (strain Badajoz 1971 Vero-adapted) (Ba71V).